Reading from the N-terminus, the 74-residue chain is DNA-directed RNA polymerase subunit omega (74 aa).

This sequence belongs to the RNA polymerase subunit omega family. In terms of assembly, the RNAP catalytic core consists of 2 alpha, 1 beta, 1 beta' and 1 omega subunit. When a sigma factor is associated with the core the holoenzyme is formed, which can initiate transcription.

It carries out the reaction RNA(n) + a ribonucleoside 5'-triphosphate = RNA(n+1) + diphosphate. Its function is as follows. Promotes RNA polymerase assembly. Latches the N- and C-terminal regions of the beta' subunit thereby facilitating its interaction with the beta and alpha subunits. The polypeptide is DNA-directed RNA polymerase subunit omega (Helicobacter pylori (strain Shi470)).